Consider the following 201-residue polypeptide: Peptide deformylase (201 aa).

Fe cation contacts are provided by Cys121 and His163. Residue Glu164 is part of the active site. His167 contacts Fe cation.

The protein belongs to the polypeptide deformylase family. It depends on Fe(2+) as a cofactor.

The enzyme catalyses N-terminal N-formyl-L-methionyl-[peptide] + H2O = N-terminal L-methionyl-[peptide] + formate. Functionally, removes the formyl group from the N-terminal Met of newly synthesized proteins. Requires at least a dipeptide for an efficient rate of reaction. N-terminal L-methionine is a prerequisite for activity but the enzyme has broad specificity at other positions. In Synechococcus sp. (strain CC9902), this protein is Peptide deformylase.